The following is a 433-amino-acid chain: Gamma-glutamyl phosphate reductase (433 aa).

It belongs to the gamma-glutamyl phosphate reductase family.

It localises to the cytoplasm. It catalyses the reaction L-glutamate 5-semialdehyde + phosphate + NADP(+) = L-glutamyl 5-phosphate + NADPH + H(+). The protein operates within amino-acid biosynthesis; L-proline biosynthesis; L-glutamate 5-semialdehyde from L-glutamate: step 2/2. Its function is as follows. Catalyzes the NADPH-dependent reduction of L-glutamate 5-phosphate into L-glutamate 5-semialdehyde and phosphate. The product spontaneously undergoes cyclization to form 1-pyrroline-5-carboxylate. This chain is Gamma-glutamyl phosphate reductase, found in Cyanothece sp. (strain PCC 7425 / ATCC 29141).